Reading from the N-terminus, the 195-residue chain is HTH-type transcriptional regulator BetI (195 aa).

An HTH tetR-type domain is found at 8 to 68 (EIRRAQLIDA…ATMRHVLRDL (61 aa)). Residues 31-50 (TLASVAQRANISTGIVSHYF) constitute a DNA-binding region (H-T-H motif).

The protein operates within amine and polyamine biosynthesis; betaine biosynthesis via choline pathway [regulation]. Its function is as follows. Repressor involved in the biosynthesis of the osmoprotectant glycine betaine. It represses transcription of the choline transporter BetT and the genes of BetAB involved in the synthesis of glycine betaine. This Burkholderia mallei (strain NCTC 10247) protein is HTH-type transcriptional regulator BetI.